The sequence spans 1039 residues: DIS3-like exonuclease 1 (1039 aa).

The CSD1 domain occupies 221–309 (PEHLPLEILE…KGRNGALCEN (89 aa)). In terms of domain architecture, CSD2 spans 359 to 425 (VLVMPWDYRI…AEIATILVEN (67 aa)). The region spanning 458–807 (RLDLRKTHLV…VHRLLLAAVN (350 aa)) is the RNB domain.

Belongs to the RNR ribonuclease family. As to quaternary structure, component of the RNA exosome complex. The cofactor is Mg(2+).

The protein resides in the cytoplasm. The catalysed reaction is Exonucleolytic cleavage in the 3'- to 5'-direction to yield nucleoside 5'-phosphates.. In terms of biological role, catalytic component of the RNA exosome complex which has 3'-&gt;5' exoribonuclease activity and participates in a multitude of cellular RNA processing and degradation events. This Xenopus tropicalis (Western clawed frog) protein is DIS3-like exonuclease 1 (dis3l).